Reading from the N-terminus, the 75-residue chain is MSGLEIMVLTLLLLVSMATSHQDGGEKQATQRDAINVRRRSITRTEACYEYCKEQNKTCCGISNGRPICVGGCIR.

The N-terminal stretch at 1–20 (MSGLEIMVLTLLLLVSMATS) is a signal peptide. The propeptide occupies 21-44 (HQDGGEKQATQRDAINVRRRSITR). 3 cysteine pairs are disulfide-bonded: C48–C60, C52–C69, and C59–C73.

It belongs to the conotoxin O3 superfamily. Expressed by the venom duct.

It localises to the secreted. This Conus ventricosus (Mediterranean cone) protein is Conotoxin VnMSGL-0111.